The following is a 527-amino-acid chain: Glucose-6-phosphate isomerase (527 aa).

The Proton donor role is filled by glutamate 323. Catalysis depends on residues histidine 352 and lysine 454.

This sequence belongs to the GPI family.

The protein resides in the cytoplasm. It catalyses the reaction alpha-D-glucose 6-phosphate = beta-D-fructose 6-phosphate. It functions in the pathway carbohydrate biosynthesis; gluconeogenesis. The protein operates within carbohydrate degradation; glycolysis; D-glyceraldehyde 3-phosphate and glycerone phosphate from D-glucose: step 2/4. In terms of biological role, catalyzes the reversible isomerization of glucose-6-phosphate to fructose-6-phosphate. The chain is Glucose-6-phosphate isomerase from Prochlorococcus marinus (strain MIT 9312).